We begin with the raw amino-acid sequence, 295 residues long: Protease HtpX homolog (295 aa).

Transmembrane regions (helical) follow at residues 6–26 (IGLF…VTSV) and 40–60 (LSSL…VSLL). His-148 is a Zn(2+) binding site. Residue Glu-149 is part of the active site. His-152 lines the Zn(2+) pocket. 2 helical membrane-spanning segments follow: residues 163 to 183 (LIQG…SYAL) and 198 to 218 (IANI…VAYF). Position 223 (Glu-223) interacts with Zn(2+).

It belongs to the peptidase M48B family. The cofactor is Zn(2+).

The protein resides in the cell inner membrane. The protein is Protease HtpX homolog of Leptospira interrogans serogroup Icterohaemorrhagiae serovar copenhageni (strain Fiocruz L1-130).